Consider the following 197-residue polypeptide: Large ribosomal subunit protein uL5 (197 aa).

It belongs to the universal ribosomal protein uL5 family. As to quaternary structure, part of the 50S ribosomal subunit; contacts the 5S rRNA and probably tRNA. Forms a bridge to the 30S subunit in the 70S ribosome.

Functionally, this is one of the proteins that bind and probably mediate the attachment of the 5S RNA into the large ribosomal subunit, where it forms part of the central protuberance. In the 70S ribosome it contacts protein S13 of the 30S subunit (bridge B1b), connecting the 2 subunits; this bridge is implicated in subunit movement. May contact the P site tRNA; the 5S rRNA and some of its associated proteins might help stabilize positioning of ribosome-bound tRNAs. This Caldivirga maquilingensis (strain ATCC 700844 / DSM 13496 / JCM 10307 / IC-167) protein is Large ribosomal subunit protein uL5.